The primary structure comprises 115 residues: Non-specific lipid-transfer protein 4.2 (115 aa).

Positions 1 to 25 (MARAAATQLVLVAMVAAMLIVATDA) are cleaved as a signal peptide. Cystine bridges form between Cys29–Cys77, Cys39–Cys54, Cys55–Cys97, and Cys75–Cys111.

Belongs to the plant LTP family.

In terms of biological role, plant non-specific lipid-transfer proteins transfer phospholipids as well as galactolipids across membranes. May play a role in wax or cutin deposition in the cell walls of expanding epidermal cells and certain secretory tissues. This chain is Non-specific lipid-transfer protein 4.2 (LTP4.2), found in Hordeum vulgare (Barley).